Consider the following 306-residue polypeptide: MELVFLGTGAGVPSRGRNVTSIALSMLNERNAIWLFDCGEATQHQVLRSHIKLSKLEKIFITHMHGDHIFGLPGLLSSRSFQGGDSDLTIYGPAGIAEYVETSLRLSGTRLTYKINFEEIEPGVIFEDEMFLVTADDLDHGVRSFGYRIVEKDKQGALNAEKLKADGVEAGPVFQKLKNGEIVTLADGRVIDGKNYIGEPQKGKIISIFGDTKETVSELELAMNADILVHEATFEGDKAKMAGEYMHSTTLQAANLAKAANVKKLILTHISSRYDRDASKELLIEAKTVFENTEIAYDLAVFQVGE.

Residues histidine 63, histidine 65, aspartate 67, histidine 68, histidine 140, aspartate 211, and histidine 269 each coordinate Zn(2+). Aspartate 67 serves as the catalytic Proton acceptor.

It belongs to the RNase Z family. In terms of assembly, homodimer. It depends on Zn(2+) as a cofactor.

It catalyses the reaction Endonucleolytic cleavage of RNA, removing extra 3' nucleotides from tRNA precursor, generating 3' termini of tRNAs. A 3'-hydroxy group is left at the tRNA terminus and a 5'-phosphoryl group is left at the trailer molecule.. Functionally, zinc phosphodiesterase, which displays some tRNA 3'-processing endonuclease activity. Probably involved in tRNA maturation, by removing a 3'-trailer from precursor tRNA. This is Ribonuclease Z from Listeria innocua serovar 6a (strain ATCC BAA-680 / CLIP 11262).